The sequence spans 70 residues: DNA-directed RNA polymerase subunit omega (70 aa).

This sequence belongs to the RNA polymerase subunit omega family. In terms of assembly, the RNAP catalytic core consists of 2 alpha, 1 beta, 1 beta' and 1 omega subunit. When a sigma factor is associated with the core the holoenzyme is formed, which can initiate transcription.

The enzyme catalyses RNA(n) + a ribonucleoside 5'-triphosphate = RNA(n+1) + diphosphate. Functionally, promotes RNA polymerase assembly. Latches the N- and C-terminal regions of the beta' subunit thereby facilitating its interaction with the beta and alpha subunits. This Marinobacter nauticus (strain ATCC 700491 / DSM 11845 / VT8) (Marinobacter aquaeolei) protein is DNA-directed RNA polymerase subunit omega.